The chain runs to 306 residues: SDS degradation transcriptional activation protein (306 aa).

In terms of domain architecture, HTH lysR-type spans 1 to 59; the sequence is MNDLRQLRHFVALAEHGHFARAAEAVNLSQPALSRSIQALENGLGCRLLDRGPRQVSLT. Positions 19 to 38 form a DNA-binding region, H-T-H motif; the sequence is FARAAEAVNLSQPALSRSIQ.

Belongs to the LysR transcriptional regulatory family.

Functionally, activates the transcription of the sdsA gene for sodium dodecyl sulfate (SDS) degradation. In Pseudomonas sp. (strain ATCC 19151), this protein is SDS degradation transcriptional activation protein (sdsB).